Consider the following 122-residue polypeptide: Lysozyme (122 aa).

Residues 3-118 (GGIVSQRCLS…WNRLQKISGC (116 aa)) form the I-type lysozyme domain. Cystine bridges form between cysteine 10–cysteine 86, cysteine 13–cysteine 118, cysteine 15–cysteine 21, cysteine 26–cysteine 35, cysteine 48–cysteine 68, cysteine 58–cysteine 64, and cysteine 82–cysteine 100. The Proton donor role is filled by glutamate 18. Aspartate 29 (nucleophile) is an active-site residue. Substrate is bound at residue 41 to 47 (KEAYWID). Substrate contacts are provided by residues tyrosine 72, histidine 93, 93–95 (HNG), and lysine 102.

Belongs to the glycosyl hydrolase 22 family. Type-I lysozyme subfamily. As to quaternary structure, monomer.

Its subcellular location is the secreted. The enzyme catalyses Hydrolysis of (1-&gt;4)-beta-linkages between N-acetylmuramic acid and N-acetyl-D-glucosamine residues in a peptidoglycan and between N-acetyl-D-glucosamine residues in chitodextrins.. Its function is as follows. Has bacteriolytic activity against Gram-positive bacteria M.luteus. Also has chitinase activity. The polypeptide is Lysozyme (Meretrix lusoria (Hard clam)).